The primary structure comprises 701 residues: Elongation factor G (701 aa).

The tr-type G domain maps to 10–286; it reads NKVRNIGIMA…AVIDYLPSPL (277 aa). Residues 19-26, 83-87, and 137-140 contribute to the GTP site; these read AHIDAGKT, DTPGH, and NKMD.

It belongs to the TRAFAC class translation factor GTPase superfamily. Classic translation factor GTPase family. EF-G/EF-2 subfamily.

The protein localises to the cytoplasm. Its function is as follows. Catalyzes the GTP-dependent ribosomal translocation step during translation elongation. During this step, the ribosome changes from the pre-translocational (PRE) to the post-translocational (POST) state as the newly formed A-site-bound peptidyl-tRNA and P-site-bound deacylated tRNA move to the P and E sites, respectively. Catalyzes the coordinated movement of the two tRNA molecules, the mRNA and conformational changes in the ribosome. This is Elongation factor G from Mycobacteroides abscessus (strain ATCC 19977 / DSM 44196 / CCUG 20993 / CIP 104536 / JCM 13569 / NCTC 13031 / TMC 1543 / L948) (Mycobacterium abscessus).